Reading from the N-terminus, the 880-residue chain is Translation initiation factor IF-2 (880 aa).

The segment at 1-251 is disordered; it reads MVDTKNPGDK…PTAKPAPAKQ (251 aa). Over residues 58–79 the composition is skewed to low complexity; sequence PADAPAAPAPVAAAKPAPVRAP. Residues 115–183 are compositionally biased toward basic and acidic residues; that stretch reads ARIRDEEERK…KRFGEEEAKK (69 aa). Composition is skewed to low complexity over residues 184-215 and 233-250; these read AAAA…VAAD and AARP…APAK. The tr-type G domain occupies 376–547; sequence PRSPVVTVMG…ALQAELLDLK (172 aa). The interval 385–392 is G1; sequence GHVDHGKT. Position 385–392 (385–392) interacts with GTP; that stretch reads GHVDHGKT. The tract at residues 410 to 414 is G2; sequence GITQH. Positions 433-436 are G3; the sequence is DTPG. Residues 433 to 437 and 487 to 490 each bind GTP; these read DTPGH and NKID. Positions 487–490 are G4; it reads NKID. Positions 523 to 525 are G5; sequence SAK.

The protein belongs to the TRAFAC class translation factor GTPase superfamily. Classic translation factor GTPase family. IF-2 subfamily.

The protein resides in the cytoplasm. Functionally, one of the essential components for the initiation of protein synthesis. Protects formylmethionyl-tRNA from spontaneous hydrolysis and promotes its binding to the 30S ribosomal subunits. Also involved in the hydrolysis of GTP during the formation of the 70S ribosomal complex. The polypeptide is Translation initiation factor IF-2 (Rhodopseudomonas palustris (strain BisB18)).